The following is a 92-amino-acid chain: Small ribosomal subunit protein uS19 (92 aa).

The protein belongs to the universal ribosomal protein uS19 family.

In terms of biological role, protein S19 forms a complex with S13 that binds strongly to the 16S ribosomal RNA. The chain is Small ribosomal subunit protein uS19 from Rhodopseudomonas palustris (strain BisB18).